The sequence spans 165 residues: MSSKSGGAKKKAGDGRKIIADNRKARFNYSIGETFEAGIELKGSEVKSLRTGQGSLNEAYAQVTRTGEVMLVNAYIPIYLQANQFNHETRRPRKLLLHKREIEKLAAAVQRQGMTVVPLRMYFTDKGRVKVEIGLAQGKKLADKRETLKERSWERDKARLMREKG.

Belongs to the SmpB family.

Its subcellular location is the cytoplasm. Its function is as follows. Required for rescue of stalled ribosomes mediated by trans-translation. Binds to transfer-messenger RNA (tmRNA), required for stable association of tmRNA with ribosomes. tmRNA and SmpB together mimic tRNA shape, replacing the anticodon stem-loop with SmpB. tmRNA is encoded by the ssrA gene; the 2 termini fold to resemble tRNA(Ala) and it encodes a 'tag peptide', a short internal open reading frame. During trans-translation Ala-aminoacylated tmRNA acts like a tRNA, entering the A-site of stalled ribosomes, displacing the stalled mRNA. The ribosome then switches to translate the ORF on the tmRNA; the nascent peptide is terminated with the 'tag peptide' encoded by the tmRNA and targeted for degradation. The ribosome is freed to recommence translation, which seems to be the essential function of trans-translation. This Parvibaculum lavamentivorans (strain DS-1 / DSM 13023 / NCIMB 13966) protein is SsrA-binding protein.